Consider the following 215-residue polypeptide: Cytochrome b6 (215 aa).

Residues 32–52 form a helical membrane-spanning segment; it reads IFHCLGGITLTCFLVQVATGF. Heme c is bound at residue cysteine 35. Heme b-binding residues include histidine 86 and histidine 100. Helical transmembrane passes span 90–110, 116–136, and 186–206; these read ASMM…TGGF, LTWV…VTGY, and LHTF…FPMI. The heme b site is built by histidine 187 and histidine 202.

This sequence belongs to the cytochrome b family. PetB subfamily. The 4 large subunits of the cytochrome b6-f complex are cytochrome b6, subunit IV (17 kDa polypeptide, PetD), cytochrome f and the Rieske protein, while the 4 small subunits are PetG, PetL, PetM and PetN. The complex functions as a dimer. It depends on heme b as a cofactor. Heme c is required as a cofactor.

It localises to the plastid. The protein localises to the chloroplast thylakoid membrane. In terms of biological role, component of the cytochrome b6-f complex, which mediates electron transfer between photosystem II (PSII) and photosystem I (PSI), cyclic electron flow around PSI, and state transitions. This is Cytochrome b6 from Amborella trichopoda.